The following is a 401-amino-acid chain: Enoyl-[acyl-carrier-protein] reductase [NADH] (401 aa).

Residues 48–53 (GASSGY), 74–75 (FE), 111–112 (DA), and 140–141 (LA) each bind NAD(+). Y226 lines the substrate pocket. Catalysis depends on Y236, which acts as the Proton donor. Residues K245 and 274–276 (VVT) each bind NAD(+).

It belongs to the TER reductase family. In terms of assembly, monomer.

It carries out the reaction a 2,3-saturated acyl-[ACP] + NAD(+) = a (2E)-enoyl-[ACP] + NADH + H(+). The protein operates within lipid metabolism; fatty acid biosynthesis. In terms of biological role, involved in the final reduction of the elongation cycle of fatty acid synthesis (FAS II). Catalyzes the reduction of a carbon-carbon double bond in an enoyl moiety that is covalently linked to an acyl carrier protein (ACP). The polypeptide is Enoyl-[acyl-carrier-protein] reductase [NADH] (Xylella fastidiosa (strain 9a5c)).